We begin with the raw amino-acid sequence, 993 residues long: Muscular LMNA-interacting protein (993 aa).

The interaction with LMNA stretch occupies residues 1 to 51; sequence MLSEQGLLSDCGNNYFQMTSCILSGSIQTTPQVSAGGSEAKPLIFTFVPTV. A disordered region spans residues 71 to 90; sequence PEESSDKSPETVNRSKSNDY. Positions 80–90 are enriched in polar residues; sequence ETVNRSKSNDY. Serine 146 carries the post-translational modification Phosphoserine. 9 disordered regions span residues 152-171, 186-225, 231-250, 300-322, 334-358, 443-481, 500-582, 677-711, and 811-864; these read AASR…AAVR, VRPK…TSEQ, PAFS…PVNL, PHST…KPGL, SHVL…SLKS, SPAS…QGEL, TPLS…IHTY, SALH…TPSL, and LSMH…SQLT. The tract at residues 161–837 is required for interaction with ISL1; the sequence is PPGGIGTAAV…GSDTVKTPTT (677 aa). Residues 212–225 are compositionally biased toward polar residues; that stretch reads KHGQLTSSPTTSEQ. Residues 300–315 show a composition bias toward polar residues; the sequence is PHSTQLSGSNLPSSTA. Residues 343 to 358 are compositionally biased toward low complexity; the sequence is PRTSSSPPSSSASLKS. A compositionally biased stretch (polar residues) spans 500-532; the sequence is TPLSQAPSLSPTKQASSSLASMNVERTPSPTLK. The span at 533–563 shows a compositional bias: low complexity; the sequence is SNTMLSLLQTSTSSSVGLPPVPPSSSLSSLK. Residues 564–574 show a composition bias toward basic and acidic residues; it reads SKQDGDLRGPE. Over residues 695–711 the composition is skewed to polar residues; the sequence is SESTTPNHRSPVSTPSL. Residues 811-822 show a composition bias toward low complexity; that stretch reads LSMHSSDSPSRS. Serine 818 bears the Phosphoserine mark. Over residues 849–864 the composition is skewed to polar residues; it reads ANLSSPSSTVSESQLT.

As to quaternary structure, directly interacts with LMNA. Interacts with ISL1 (via N-terminal domain); the interaction represses ISL1 transactivator activity. Interactions of ISL1 with MLIP1 and GCN5/KAT2A may be mutually exclusive. In terms of tissue distribution, predominantly expressed in the heart and skeletal muscle. Also detected in liver. As to expression, expressed in skeletal muscle.

The protein resides in the nucleus. It is found in the nucleus envelope. It localises to the PML body. The protein localises to the cytoplasm. Its subcellular location is the cytosol. The protein resides in the cell membrane. It is found in the sarcolemma. Its function is as follows. Required for myoblast differentiation into myotubes, possibly acting as a transcriptional regulator of the myogenic program. Required for cardiac adaptation to stress through integrated regulation of the AKT/mTOR pathways and FOXO1. Regulates cardiac homeostasis and plays a role in the protection against cardiac hypertrophy. Binds chromatin. May act as a transcriptional cofactor for ISL1, repressing its transcriptional activity. May also repress MYOCD transcriptional activity. The protein is Muscular LMNA-interacting protein of Homo sapiens (Human).